Here is a 790-residue protein sequence, read N- to C-terminus: Ribosome biogenesis protein ERB1 (790 aa).

Positions 1 to 93 (MAKKNTVTGS…SDELQDDSNS (93 aa)) are disordered. Residues 20-89 (SPEVSESEEI…SEDFSDELQD (70 aa)) show a composition bias toward acidic residues. The interval 255–371 (RFVPSKHEAK…LRKVPAYQEN (117 aa)) is required for interaction with NOP7. The segment at 371–407 (NLRERFERSLDLYLAPRVRHNKLNIDPDSLIPDLPSP) is required for interaction with YTM1. WD repeat units follow at residues 423–462 (GHIGRVRTLSIDPSGLWLATGGDDGTVRVWEILTGRQVYH), 470–510 (KDDD…YEIE), 574–616 (QCRK…SQSP), 619–657 (KSKGIIVDAKFHPFKPQLFVASQRSIKIYDLSQQVLTKK), 660–699 (PGARYLSGIDIHPRGDHLLASSYDKRVLWHDLDLSNTPYK), 703–743 (YHEK…DLMT), and 759–790 (VHSLGVLDLVWHPKEAWLFTAGADGTARLWTT).

This sequence belongs to the WD repeat BOP1/ERB1 family. As to quaternary structure, component of the NOP7 complex, composed of ERB1, NOP7 and YTM1. The complex is held together by ERB1, which interacts with NOP7 via its N-terminal domain and with YTM1 via a high-affinity interaction between the seven-bladed beta-propeller domains of the 2 proteins. The NOP7 complex associates with the 66S pre-ribosome.

The protein localises to the nucleus. It localises to the nucleolus. Its subcellular location is the nucleoplasm. Its function is as follows. Component of the NOP7 complex, which is required for maturation of the 25S and 5.8S ribosomal RNAs and formation of the 60S ribosome. In Meyerozyma guilliermondii (strain ATCC 6260 / CBS 566 / DSM 6381 / JCM 1539 / NBRC 10279 / NRRL Y-324) (Yeast), this protein is Ribosome biogenesis protein ERB1.